The primary structure comprises 217 residues: Large ribosomal subunit protein uL4 (217 aa).

Positions 58-90 are disordered; that stretch reads TAATKGRSDVSGGGKKPWRQKGTGRARSGTSRS.

It belongs to the universal ribosomal protein uL4 family. In terms of assembly, part of the 50S ribosomal subunit.

One of the primary rRNA binding proteins, this protein initially binds near the 5'-end of the 23S rRNA. It is important during the early stages of 50S assembly. It makes multiple contacts with different domains of the 23S rRNA in the assembled 50S subunit and ribosome. In terms of biological role, forms part of the polypeptide exit tunnel. In Syntrophus aciditrophicus (strain SB), this protein is Large ribosomal subunit protein uL4.